The chain runs to 418 residues: MGSDAKNLMSDGNVQIVKTGEVIGATQLTEGELIVEAGGRAENTVVTGAGWLKVATGGIAKCTQYGNNGTLSVSDGAIATDIVQSEGGAISLSTLATVNGRHPEGEFSVDQGYACGLLLENGGNLRVLEGHRAEKIILDQEGGLLVNGTTSAVVVDEGGELLVYPGGEASNCEINQGGVFMLAGKANDTLLADGTMNNLGGEDSDTIVENGAIYRLGTDGLQLYSSGKTQNLSVNVGGRAEVHAGTLENAVIQGGTVILLSPTSADENFVVEEDRAPVELTGSVALLDGASMIIGYGADLQQSTITVQQGGVLILDGSTVKGDSVTFSIGNINLNGGKLWLITGAATHVQLKVKRLRGEGAICLQTSAKEISPDFINVKGEVNGDIRVQITDASRQTLCNALKLQPDEDGIGATLQPA.

This is an uncharacterized protein from Escherichia coli O157:H7.